The following is a 132-amino-acid chain: HLA class I histocompatibility antigen protein P5 (132 aa).

As to expression, expressed in lymphoid tissues; Detected in spleen as well as in B-cell lines, NK cell lines and activated lymphocytes.

In Homo sapiens (Human), this protein is HLA class I histocompatibility antigen protein P5 (HCP5).